We begin with the raw amino-acid sequence, 146 residues long: Large ribosomal subunit protein uL15 (146 aa).

Residues 1–56 are disordered; that stretch reads MRLHDLRPVPGSRQKPTRKGQGIGSGLGKTAGRGQKGQKARSGGGVRPGFEGGQMP. Gly residues-rich tracts occupy residues 21-35 and 42-52; these read QGIGSGLGKTAGRGQ and SGGGVRPGFEG.

Belongs to the universal ribosomal protein uL15 family. As to quaternary structure, part of the 50S ribosomal subunit.

In terms of biological role, binds to the 23S rRNA. This is Large ribosomal subunit protein uL15 from Carboxydothermus hydrogenoformans (strain ATCC BAA-161 / DSM 6008 / Z-2901).